The chain runs to 767 residues: Cadherin-5 (767 aa).

The signal sequence occupies residues 1 to 29 (MMKQCARRQMTEPVFRVAVLLALCSLSIG). The propeptide occupies 30-51 (VDVHQAQKTPSISSAALQRHKR). The Extracellular segment spans residues 30–593 (VDVHQAQKTP…SYARTGMSVS (564 aa)). Ca(2+) is bound by residues E62, E63, D113, and E115. 5 consecutive Cadherin domains span residues 86 to 155 (RYIL…IPVF), 155 to 261 (FDSD…IATF), 262 to 373 (KKER…PPIF), 374 to 475 (NQTE…APEL), and 475 to 581 (LTNG…RVEY). N121 carries N-linked (GlcNAc...) asparagine glycosylation. Residues D147, I148, N149, D150, N151, D180, and D182 each contribute to the Ca(2+) site. N197 carries an N-linked (GlcNAc...) asparagine glycan. Residue D233 coordinates Ca(2+). N374, N477, and N518 each carry an N-linked (GlcNAc...) asparagine glycan. Residues 594-614 (ALLAILLCIITILVIVILIVL) form a helical membrane-spanning segment. Residues 615 to 767 (RRRYQKEVLV…VDGSDSDSSY (153 aa)) are Cytoplasmic-facing.

It localises to the cell membrane. It is found in the cell junction. The protein localises to the adherens junction. Cadherins are calcium-dependent cell adhesion proteins. They preferentially interact with themselves in a homophilic manner in connecting cells; cadherins may thus contribute to the sorting of heterogeneous cell types. Required for embryonic cardiac looping and heart chamber development, via promotion of cell-cell junction formation and subsequent attachment between the endothelial and myocardial layers of the heart. Required for the directional migration and delamination of endothelial cell monolayers, by which common cardinal veins form via the lumen ensheathment mechanism of vessel development as they migrate and connect with the heart inflow tract. Required for the formation of filopodia extensions (sprouts) at the initiation of intersegmental vessel development, by acting (via its C-terminus) to facilitate anchoring of the actin cytoskeleton to cell junctions in endothelial cells. Then positively regulates dorsal migration of stalk cells and sprout outgrowth towards the dorsal longitudinal anastomotic vessels (DLAV) via endothelial cell elongation. Following contact with the DLAV, required for intersegmental vessel lumen formation, potentially via facilitating the formation and/or extension of endothelial cell tight junctions that are required during tubulogenesis. This is Cadherin-5 from Danio rerio (Zebrafish).